We begin with the raw amino-acid sequence, 447 residues long: Methionine aminopeptidase 2-2 (447 aa).

The interval 1 to 89 (MAAQTAPELA…PRIPLTTLFP (89 aa)) is disordered. Positions 15–30 (NKNSGSAEANVVSNGG) are enriched in polar residues. Over residues 34 to 47 (DDAENEGDSDDDKD) the composition is skewed to acidic residues. Residues 59–73 (KKKKKKRSKKKKKAA) are compositionally biased toward basic residues. Position 197 (His197) interacts with substrate. A divalent metal cation contacts are provided by Asp217, Asp228, and His297. His305 lines the substrate pocket. The a divalent metal cation site is built by Glu333 and Glu428.

This sequence belongs to the peptidase M24A family. Methionine aminopeptidase eukaryotic type 2 subfamily. Co(2+) serves as cofactor. It depends on Zn(2+) as a cofactor. Mn(2+) is required as a cofactor. Requires Fe(2+) as cofactor.

It is found in the cytoplasm. The catalysed reaction is Release of N-terminal amino acids, preferentially methionine, from peptides and arylamides.. Cotranslationally removes the N-terminal methionine from nascent proteins. The N-terminal methionine is often cleaved when the second residue in the primary sequence is small and uncharged (Met-Ala-, Cys, Gly, Pro, Ser, Thr, or Val). In Arthroderma otae (strain ATCC MYA-4605 / CBS 113480) (Microsporum canis), this protein is Methionine aminopeptidase 2-2.